Consider the following 321-residue polypeptide: Malate dehydrogenase (321 aa).

NAD(+)-binding positions include 11–16 and Asp-35; that span reads GSGNIG. Substrate is bound by residues Arg-84 and Arg-90. NAD(+)-binding positions include Asn-97 and 120–122; that span reads ITN. Asn-122 and Arg-153 together coordinate substrate. The Proton acceptor role is filled by His-177.

Belongs to the LDH/MDH superfamily. MDH type 3 family.

It catalyses the reaction (S)-malate + NAD(+) = oxaloacetate + NADH + H(+). Its function is as follows. Catalyzes the reversible oxidation of malate to oxaloacetate. This is Malate dehydrogenase from Rickettsia peacockii (strain Rustic).